A 72-amino-acid polypeptide reads, in one-letter code: Brevinin-2SN3 (72 aa).

A signal peptide spans 1 to 22 (MFTLKKPLLLLVFLGMISLSLC). Positions 23 to 40 (QDERGADEDDGGEMTEEE) are cleaved as a propeptide — removed in mature form. The cysteines at positions 66 and 72 are disulfide-linked.

This sequence belongs to the frog skin active peptide (FSAP) family. Brevinin subfamily. As to expression, expressed by the skin glands.

Its subcellular location is the secreted. Antimicrobial peptide. Active against a variety of Gram-negative and Gram-positive bacterial strains. Active against fungus C.glabrata 090902 but not against C.albicans ATCC 10231. Shows hemolytic activity against human erythrocytes. This Sylvirana spinulosa (Fine-spined frog) protein is Brevinin-2SN3.